The primary structure comprises 396 residues: Elongation factor Tu-B (396 aa).

The tr-type G domain maps to 10-206 (KLHVNVGTIG…ALDTFIPDPT (197 aa)). Positions 19–26 (GHVDHGKT) are G1. 19–26 (GHVDHGKT) is a GTP binding site. Threonine 26 contributes to the Mg(2+) binding site. A G2 region spans residues 60 to 64 (GITIS). A G3 region spans residues 81–84 (DCPG). GTP contacts are provided by residues 81 to 85 (DCPGH) and 136 to 139 (NKAD). Residues 136–139 (NKAD) form a G4 region. A G5 region spans residues 174–176 (SAR).

Belongs to the TRAFAC class translation factor GTPase superfamily. Classic translation factor GTPase family. EF-Tu/EF-1A subfamily. As to quaternary structure, monomer.

The protein resides in the cytoplasm. It catalyses the reaction GTP + H2O = GDP + phosphate + H(+). In terms of biological role, GTP hydrolase that promotes the GTP-dependent binding of aminoacyl-tRNA to the A-site of ribosomes during protein biosynthesis. This chain is Elongation factor Tu-B, found in Xanthomonas campestris pv. campestris (strain ATCC 33913 / DSM 3586 / NCPPB 528 / LMG 568 / P 25).